Consider the following 263-residue polypeptide: Small ribosomal subunit protein eS4 (263 aa).

Positions 42-105 (LPLIIFLRNR…GENFRLIYDV (64 aa)) constitute an S4 RNA-binding domain.

It belongs to the eukaryotic ribosomal protein eS4 family. Component of the small ribosomal subunit. Part of the small subunit (SSU) processome, composed of more than 70 proteins and the RNA chaperone small nucleolar RNA (snoRNA) U3.

The protein resides in the cytoplasm. It localises to the nucleus. Its subcellular location is the nucleolus. In terms of biological role, component of the small ribosomal subunit. The ribosome is a large ribonucleoprotein complex responsible for the synthesis of proteins in the cell. Part of the small subunit (SSU) processome, first precursor of the small eukaryotic ribosomal subunit. During the assembly of the SSU processome in the nucleolus, many ribosome biogenesis factors, an RNA chaperone and ribosomal proteins associate with the nascent pre-rRNA and work in concert to generate RNA folding, modifications, rearrangements and cleavage as well as targeted degradation of pre-ribosomal RNA by the RNA exosome. The protein is Small ribosomal subunit protein eS4 (rps4x) of Danio rerio (Zebrafish).